The sequence spans 89 residues: MTEAKKSLKRTLVGKVVSDKRAKTVTVLVERRVKHPIYDKIMIKSSKYHAHDENGEYKMGDTIEITESRPLSKTKNWVATRLVQKAGLL.

This sequence belongs to the universal ribosomal protein uS17 family. Part of the 30S ribosomal subunit.

One of the primary rRNA binding proteins, it binds specifically to the 5'-end of 16S ribosomal RNA. The sequence is that of Small ribosomal subunit protein uS17 from Acidovorax ebreus (strain TPSY) (Diaphorobacter sp. (strain TPSY)).